Here is a 193-residue protein sequence, read N- to C-terminus: NADH-quinone oxidoreductase subunit B (193 aa).

Residues cysteine 72, cysteine 73, cysteine 137, and cysteine 167 each contribute to the [4Fe-4S] cluster site.

It belongs to the complex I 20 kDa subunit family. As to quaternary structure, NDH-1 is composed of 14 different subunits. Subunits NuoB, C, D, E, F, and G constitute the peripheral sector of the complex. [4Fe-4S] cluster serves as cofactor.

The protein localises to the cell inner membrane. It carries out the reaction a quinone + NADH + 5 H(+)(in) = a quinol + NAD(+) + 4 H(+)(out). Functionally, NDH-1 shuttles electrons from NADH, via FMN and iron-sulfur (Fe-S) centers, to quinones in the respiratory chain. The immediate electron acceptor for the enzyme in this species is believed to be ubiquinone. Couples the redox reaction to proton translocation (for every two electrons transferred, four hydrogen ions are translocated across the cytoplasmic membrane), and thus conserves the redox energy in a proton gradient. This Bartonella bacilliformis (strain ATCC 35685 / KC583 / Herrer 020/F12,63) protein is NADH-quinone oxidoreductase subunit B.